The following is a 96-amino-acid chain: Small ribosomal subunit protein bS6 (96 aa).

This sequence belongs to the bacterial ribosomal protein bS6 family.

Binds together with bS18 to 16S ribosomal RNA. The sequence is that of Small ribosomal subunit protein bS6 from Streptococcus pneumoniae serotype 2 (strain D39 / NCTC 7466).